A 226-amino-acid chain; its full sequence is Putative integrase V10 (226 aa).

Catalysis depends on residues arginine 97, histidine 174, and arginine 177. Tyrosine 210 serves as the catalytic O-(3'-phospho-DNA)-tyrosine intermediate.

The protein belongs to the 'phage' integrase family.

May catalyze site-specific integration of viral genome into host or helper virus DNA. The chain is Putative integrase V10 from Acanthamoeba polyphaga (Amoeba).